The sequence spans 296 residues: NADPH-dependent 1-acyldihydroxyacetone phosphate reductase (296 aa).

I9 serves as a coordination point for NADP(+). Positions 11–15 match the GXSXG motif; it reads GCSEG. The NADP(+) site is built by T35, R41, D56, N84, K117, Y148, K152, V181, and T183. Catalysis depends on Y148, which acts as the Proton donor. K152 acts as the Lowers pKa of active site Tyr in catalysis.

The protein belongs to the short-chain dehydrogenases/reductases (SDR) family.

It is found in the lipid droplet. It localises to the cytoplasm. The protein resides in the vacuole. Its subcellular location is the endoplasmic reticulum. The protein localises to the golgi apparatus. It is found in the mitochondrion outer membrane. The enzyme catalyses 1-hexadecanoyl-sn-glycero-3-phosphate + NADP(+) = 1-hexadecanoylglycerone 3-phosphate + NADPH + H(+). It catalyses the reaction a 1-acylglycerone 3-phosphate + NADPH + H(+) = a 1-acyl-sn-glycero-3-phosphate + NADP(+). The catalysed reaction is a triacylglycerol + H2O = a diacylglycerol + a fatty acid + H(+). In terms of biological role, can convert acyl and alkyl dihydroxyacetone-phosphate (DHAP) into glycerolipids and ether lipids, respectively. Required for the biosynthesis of phosphatidic acid via the DHAP pathway, where it reduces 1-acyl DHAP to lysophosphatidic acid (LPA). Also has triacylglycerol (TAG) lipase activity. Involved in the mobilization of the non-polar storage lipids triacylglycerols (TAGs) from lipid particles by hydrolysis of TAGs. Lipolysis of TAG by AYR1 is essential for starvation-induced autophagy. Forms an NADPH-regulated cation-selective channel in the mitochondrial outer membrane. This Schizosaccharomyces pombe (strain 972 / ATCC 24843) (Fission yeast) protein is NADPH-dependent 1-acyldihydroxyacetone phosphate reductase (ayr1).